The following is a 60-amino-acid chain: UPF0434 protein NMA0874 (60 aa).

The protein belongs to the UPF0434 family.

The polypeptide is UPF0434 protein NMA0874 (Neisseria meningitidis serogroup A / serotype 4A (strain DSM 15465 / Z2491)).